The primary structure comprises 831 residues: Isethionate sulfite-lyase (831 aa).

The region spanning 32 to 701 is the PFL domain; sequence PRVFRLLERF…VVSATPNGRT (670 aa). 2-hydroxyethane-1-sulfonate is bound by residues R189, Q193, 468–470, and R679; that span reads CTE. Residue C468 is the Cysteine radical intermediate of the active site. Residue E470 is the Proton acceptor of the active site. Residues 708-831 enclose the Glycine radical domain; sequence DGSSASHGAD…LIARTEHDVM (124 aa). A Glycine radical modification is found at G806.

It belongs to the glycyl radical enzyme (GRE) family. As to quaternary structure, homodimer. Requires the activating protein IslB to generate the key active site glycyl radical on Gly-806 that is involved in catalysis.

It carries out the reaction 2-hydroxyethane-1-sulfonate = acetaldehyde + sulfite + H(+). Its pathway is organosulfur degradation; alkanesulfonate degradation. In terms of biological role, involved in an anaerobic respiration pathway that converts the sulfonate isethionate (2-hydroxyethanesulfonate) to ammonia, acetate and sulfide. Catalyzes the radical-mediated C-S bond cleavage of isethionate (2-hydroxyethanesulfonate) to form sulfite and acetaldehyde. This is Isethionate sulfite-lyase from Desulfovibrio desulfuricans (strain ATCC 27774 / DSM 6949 / MB).